The primary structure comprises 426 residues: Transcriptional enhancer factor TEF-1 (426 aa).

Residue Met1 is modified to N-acetylmethionine. The span at 1–12 shows a compositional bias: polar residues; that stretch reads MEPSSWSGSESP. Positions 1 to 31 are disordered; that stretch reads MEPSSWSGSESPAENMERMSDSADKPIDNDA. Ser11 carries the post-translational modification Phosphoserine. Residues 15–28 show a composition bias toward basic and acidic residues; it reads NMERMSDSADKPID. Positions 28–104 form a DNA-binding region, TEA; the sequence is DNDAEGVWSP…QVLARRKSRD (77 aa). An N6-lactoyllysine modification is found at Lys108. A transcriptional activation region spans residues 167–426; the sequence is GSSQDVKPFV…QHHIYRLVKD (260 aa).

Interacts with YAP1 and WWTR1/TAZ. In terms of processing, lactylation by AARS1 promotes nuclear localization and stabilization of YAP1, leading to increased Hippo signaling pathway. Delactylated by SIRT1. In terms of tissue distribution, preferentially expressed in skeletal muscle. Lower levels in pancreas, placenta, and heart.

It is found in the nucleus. Transcription factor which plays a key role in the Hippo signaling pathway, a pathway involved in organ size control and tumor suppression by restricting proliferation and promoting apoptosis. The core of this pathway is composed of a kinase cascade wherein MST1/MST2, in complex with its regulatory protein SAV1, phosphorylates and activates LATS1/2 in complex with its regulatory protein MOB1, which in turn phosphorylates and inactivates YAP1 oncoprotein and WWTR1/TAZ. Acts by mediating gene expression of YAP1 and WWTR1/TAZ, thereby regulating cell proliferation, migration and epithelial mesenchymal transition (EMT) induction. Binds specifically and cooperatively to the SPH and GT-IIC 'enhansons' (5'-GTGGAATGT-3') and activates transcription in vivo in a cell-specific manner. The activation function appears to be mediated by a limiting cell-specific transcriptional intermediary factor (TIF). Involved in cardiac development. Binds to the M-CAT motif. The polypeptide is Transcriptional enhancer factor TEF-1 (TEAD1) (Homo sapiens (Human)).